A 601-amino-acid chain; its full sequence is Kelch repeat and BTB domain-containing protein 8 (601 aa).

Residues 1-25 (MAASADLSKSSPTPNGIPSSDPASD) form a disordered region. A compositionally biased stretch (polar residues) spans 7-22 (LSKSSPTPNGIPSSDP). Positions 49-117 (TDIVVEVDHG…AYTSRVILTE (69 aa)) constitute a BTB domain. The 100-residue stretch at 153-252 (IGVFIFADHY…PLMEDTFIEK (100 aa)) folds into the BACK domain. Kelch repeat units lie at residues 336–390 (DIYI…YCCG), 391–441 (KMYA…EYKE), 443–481 (IYVLQGEFFLFYEPQKDYWGFLTPMTVPRIQGLAAVYKD), 483–532 (IYYI…LFQN), and 542–588 (QVTV…FECA).

The protein belongs to the KBTBD8 family. As to quaternary structure, component of the BCR(KBTBD8) E3 ubiquitin ligase complex, at least composed of CUL3, KBTBD8 and RBX1.

It is found in the cytoplasm. The protein localises to the cytoskeleton. Its subcellular location is the spindle. The protein resides in the golgi apparatus. Functionally, substrate-specific adapter of a BCR (BTB-CUL3-RBX1) E3 ubiquitin ligase complex that acts as a regulator of neural crest specification. The BCR(KBTBD8) complex acts by mediating monoubiquitination of NOLC1 and TCOF1: monoubiquitination promotes the formation of a NOLC1-TCOF1 complex that acts as a platform to connect RNA polymerase I with enzymes responsible for ribosomal processing and modification, leading to remodel the translational program of differentiating cells in favor of neural crest specification. The sequence is that of Kelch repeat and BTB domain-containing protein 8 (KBTBD8) from Homo sapiens (Human).